We begin with the raw amino-acid sequence, 360 residues long: Alanine racemase (360 aa).

Lysine 36 functions as the Proton acceptor; specific for D-alanine in the catalytic mechanism. Lysine 36 carries the post-translational modification N6-(pyridoxal phosphate)lysine. Arginine 132 provides a ligand contact to substrate. Catalysis depends on tyrosine 256, which acts as the Proton acceptor; specific for L-alanine. Methionine 304 contacts substrate.

The protein belongs to the alanine racemase family. It depends on pyridoxal 5'-phosphate as a cofactor.

The enzyme catalyses L-alanine = D-alanine. The protein operates within amino-acid biosynthesis; D-alanine biosynthesis; D-alanine from L-alanine: step 1/1. Its function is as follows. Catalyzes the interconversion of L-alanine and D-alanine. May also act on other amino acids. The protein is Alanine racemase (alr) of Haemophilus influenzae (strain ATCC 51907 / DSM 11121 / KW20 / Rd).